The following is a 447-amino-acid chain: ATP-dependent protease ATPase subunit HslU (447 aa).

ATP contacts are provided by residues I17 and 59-64; that span reads GVGKTE. The tract at residues 136 to 160 is disordered; it reads PPARGGFQGEPTAEEKPTEKKESAT. Positions 148–159 are enriched in basic and acidic residues; sequence AEEKPTEKKESA. D260, E325, and R397 together coordinate ATP.

Belongs to the ClpX chaperone family. HslU subfamily. In terms of assembly, a double ring-shaped homohexamer of HslV is capped on each side by a ring-shaped HslU homohexamer. The assembly of the HslU/HslV complex is dependent on binding of ATP.

The protein localises to the cytoplasm. Functionally, ATPase subunit of a proteasome-like degradation complex; this subunit has chaperone activity. The binding of ATP and its subsequent hydrolysis by HslU are essential for unfolding of protein substrates subsequently hydrolyzed by HslV. HslU recognizes the N-terminal part of its protein substrates and unfolds these before they are guided to HslV for hydrolysis. The polypeptide is ATP-dependent protease ATPase subunit HslU (Coxiella burnetii (strain RSA 331 / Henzerling II)).